A 591-amino-acid polypeptide reads, in one-letter code: Thiol:disulfide interchange protein DsbD 1 (591 aa).

The N-terminal stretch at Met-1–Ala-18 is a signal peptide. The Periplasmic portion of the chain corresponds to Gly-19–Ser-175. Intrachain disulfides connect Cys-134–Cys-140 and Cys-191–Cys-313. Residues Leu-176–Leu-196 form a helical membrane-spanning segment. Over Pro-197–Gly-213 the chain is Cytoplasmic. The helical transmembrane segment at Phe-214–Leu-234 threads the bilayer. The Periplasmic portion of the chain corresponds to Met-235–Pro-251. Residues Trp-252–Phe-272 traverse the membrane as a helical segment. Residues Glu-273–Ser-295 are Cytoplasmic-facing. A helical transmembrane segment spans residues Ile-296–Ala-316. Residues Pro-317–Leu-338 are Periplasmic-facing. Residues Phe-339–Leu-359 form a helical membrane-spanning segment. At Leu-360 to Ala-365 the chain is on the cytoplasmic side. A helical transmembrane segment spans residues Trp-366–Leu-386. The Periplasmic segment spans residues Glu-387–Gly-392. A helical membrane pass occupies residues Pro-393 to Leu-413. Over Glu-414–Arg-423 the chain is Cytoplasmic. Residues Leu-424–Leu-444 traverse the membrane as a helical segment. Over Gln-445–Gln-591 the chain is Periplasmic. Residues His-452–Thr-589 form the Thioredoxin domain. The cysteines at positions 504 and 507 are disulfide-linked.

Belongs to the thioredoxin family. DsbD subfamily.

Its subcellular location is the cell inner membrane. It carries out the reaction [protein]-dithiol + NAD(+) = [protein]-disulfide + NADH + H(+). The catalysed reaction is [protein]-dithiol + NADP(+) = [protein]-disulfide + NADPH + H(+). Required to facilitate the formation of correct disulfide bonds in some periplasmic proteins and for the assembly of the periplasmic c-type cytochromes. Acts by transferring electrons from cytoplasmic thioredoxin to the periplasm. This transfer involves a cascade of disulfide bond formation and reduction steps. In Pseudomonas aeruginosa (strain ATCC 15692 / DSM 22644 / CIP 104116 / JCM 14847 / LMG 12228 / 1C / PRS 101 / PAO1), this protein is Thiol:disulfide interchange protein DsbD 1.